A 311-amino-acid polypeptide reads, in one-letter code: tRNA-cytidine(32) 2-sulfurtransferase (311 aa).

The PP-loop motif signature appears at 47–52 (SGGKDS). Cys-122, Cys-125, and Cys-213 together coordinate [4Fe-4S] cluster.

The protein belongs to the TtcA family. As to quaternary structure, homodimer. Mg(2+) serves as cofactor. The cofactor is [4Fe-4S] cluster.

The protein localises to the cytoplasm. The catalysed reaction is cytidine(32) in tRNA + S-sulfanyl-L-cysteinyl-[cysteine desulfurase] + AH2 + ATP = 2-thiocytidine(32) in tRNA + L-cysteinyl-[cysteine desulfurase] + A + AMP + diphosphate + H(+). It participates in tRNA modification. Catalyzes the ATP-dependent 2-thiolation of cytidine in position 32 of tRNA, to form 2-thiocytidine (s(2)C32). The sulfur atoms are provided by the cysteine/cysteine desulfurase (IscS) system. This Escherichia coli O81 (strain ED1a) protein is tRNA-cytidine(32) 2-sulfurtransferase.